Reading from the N-terminus, the 561-residue chain is Urocanate hydratase (561 aa).

Residues 52 to 53 (GG), glutamine 130, 176 to 178 (GMG), glutamate 196, arginine 201, 242 to 243 (NA), 263 to 267 (QTSAH), 273 to 274 (YL), and tyrosine 322 contribute to the NAD(+) site. Residue cysteine 410 is part of the active site. Residue glycine 492 coordinates NAD(+).

Belongs to the urocanase family. It depends on NAD(+) as a cofactor.

The protein localises to the cytoplasm. The enzyme catalyses 4-imidazolone-5-propanoate = trans-urocanate + H2O. Its pathway is amino-acid degradation; L-histidine degradation into L-glutamate; N-formimidoyl-L-glutamate from L-histidine: step 2/3. Functionally, catalyzes the conversion of urocanate to 4-imidazolone-5-propionate. This Salmonella agona (strain SL483) protein is Urocanate hydratase.